The sequence spans 51 residues: uncharacterized protein (51 aa).

Functionally, this protein is non-essential for virus function. This is an uncharacterized protein from Sulfolobus spindle-shape virus 1 (SSV1).